Reading from the N-terminus, the 331-residue chain is MDRTTVVPSPASTYCSFMGGSQHSPLRRSQRLIDKENRDLQKIPPKSLSPQLFGNTEDDYSELLLQQGKVVHLKPAAKLVPVRSSDNLVHLGSRDKVVPLKTSNRIVHLKPPYKIIHLKSLDEVEKTVKKKNNIQKEVHQRNSQRRSIQCTPKKRGRKPKQPAKKLQSRISTDQLGSTPSPSKLPAKYPAHFVHQLPPAEDSSCATRRRSLSAPAMQLSDLSLTPDEIQTPERRGEIVNKSPSDLDSDVSLNFSLSDSIGEIFGTKDISSILTMQRPRQYILLEEHLPTLATMLNVDLERLRCVLDITQGLSHEQILRFPIKHEEDELEVP.

A disordered region spans residues 132–187 (NNIQKEVHQRNSQRRSIQCTPKKRGRKPKQPAKKLQSRISTDQLGSTPSPSKLPAK). Positions 152–167 (PKKRGRKPKQPAKKLQ) are enriched in basic residues. Residues 168–181 (SRISTDQLGSTPSP) are compositionally biased toward polar residues.

Belongs to the TOP6B-like family.

The protein resides in the chromosome. Required for formation of the mei-W68-mediated double-strand breaks (DSBs) that initiate meiotic recombination. The protein is Meiotic recombination protein P22 of Drosophila melanogaster (Fruit fly).